The following is a 194-amino-acid chain: Heme transporter hrg-1 (194 aa).

Transmembrane regions (helical) follow at residues 45–65 (QIWIAWLGVSAGVMAGTVFAI), 71–91 (IAVTMCFISSGFATLVLHLHL), 113–133 (GATVSFLSFIAMVFCLVVAGI), and 143–163 (LMGANLWIAAVWFFMTSKWSA). The Di-leucine motif motif lies at 182 to 183 (LL).

The protein belongs to the HRG family. Specifically expressed in the intestinal cells in larvae and adults.

It is found in the endosome membrane. The protein resides in the lysosome membrane. Heme transporter that regulates intracellular heme availability through the endosomal or lysosomal compartment. The chain is Heme transporter hrg-1 (hrg-1) from Caenorhabditis elegans.